Reading from the N-terminus, the 354-residue chain is Protein CbrA (354 aa).

This sequence belongs to the CbrA family.

The polypeptide is Protein CbrA (cbrA) (Escherichia coli (strain K12)).